A 20-amino-acid polypeptide reads, in one-letter code: Cytochrome P450 3A5 (20 aa).

The protein belongs to the cytochrome P450 family. Requires heme as cofactor.

Its subcellular location is the endoplasmic reticulum membrane. It is found in the microsome membrane. It carries out the reaction an organic molecule + reduced [NADPH--hemoprotein reductase] + O2 = an alcohol + oxidized [NADPH--hemoprotein reductase] + H2O + H(+). 6-beta-testosterone hydroxylase. The chain is Cytochrome P450 3A5 from Papio sp. (Baboon).